Here is a 349-residue protein sequence, read N- to C-terminus: Anthranilate phosphoribosyltransferase (349 aa).

5-phospho-alpha-D-ribose 1-diphosphate is bound by residues Gly-82, 85–86, 92–95, 110–118, and Ser-122; these read GD, NVST, and KHGNRAVSG. Residue Gly-82 participates in anthranilate binding. Ser-94 serves as a coordination point for Mg(2+). Residue Asn-113 participates in anthranilate binding. An anthranilate-binding site is contributed by Arg-168. Positions 227 and 228 each coordinate Mg(2+).

The protein belongs to the anthranilate phosphoribosyltransferase family. Homodimer. The cofactor is Mg(2+).

It carries out the reaction N-(5-phospho-beta-D-ribosyl)anthranilate + diphosphate = 5-phospho-alpha-D-ribose 1-diphosphate + anthranilate. It functions in the pathway amino-acid biosynthesis; L-tryptophan biosynthesis; L-tryptophan from chorismate: step 2/5. Functionally, catalyzes the transfer of the phosphoribosyl group of 5-phosphorylribose-1-pyrophosphate (PRPP) to anthranilate to yield N-(5'-phosphoribosyl)-anthranilate (PRA). The protein is Anthranilate phosphoribosyltransferase of Pseudomonas putida (Arthrobacter siderocapsulatus).